We begin with the raw amino-acid sequence, 1410 residues long: Endoribonuclease Dicer homolog 2a (1410 aa).

The segment covering 1–15 (MGGPLTAAGGRGDGG) has biased composition (gly residues). The interval 1 to 30 (MGGPLTAAGGRGDGGAKAVEPLRPPPPPDP) is disordered. One can recognise a Helicase ATP-binding domain in the interval 41–222 (ALERAVRGNT…HNYSKQISEI (182 aa)). 54–61 (LETGSGKT) is a binding site for ATP. The DECH box signature appears at 163-166 (DECH). A Helicase C-terminal domain is found at 388-561 (TLLQYRHMQD…DTYYRVESTR (174 aa)). Residues 569–655 (SVPLIHFFCS…LPELDVPCDE (87 aa)) form the Dicer dsRNA-binding fold domain. The PAZ domain maps to 827-942 (KDIDLLQTKD…LPPELCRIIM (116 aa)). RNase III domains lie at 969-1124 (SVKL…STAG) and 1161-1308 (VRSL…LDSK). Residues E1200, D1294, and E1297 each contribute to the Mg(2+) site. In terms of domain architecture, DRBM spans 1334 to 1400 (DPVKGLQEFC…SKAVLKDLIA (67 aa)).

This sequence belongs to the helicase family. Dicer subfamily. As to quaternary structure, may interact with ARGONAUTE1 or PINHEAD through their common PAZ domains. The cofactor is Mg(2+). Mn(2+) serves as cofactor.

It localises to the nucleus. Probably involved in the RNA silencing pathway. May cleave double-stranded RNA to produce short 21-24 nucleotides (nt) RNAs which target the selective destruction of complementary RNAs. The polypeptide is Endoribonuclease Dicer homolog 2a (DCL2A) (Oryza sativa subsp. japonica (Rice)).